The primary structure comprises 64 residues: Probable cytochrome c oxidase subunit 5C-1 (64 aa).

The helical transmembrane segment at 15 to 34 (SVVKELFIGLALGLAAGGLW) threads the bilayer.

This sequence belongs to the cytochrome c oxidase subunit 5C family.

The protein localises to the mitochondrion inner membrane. In terms of biological role, this protein is one of the nuclear-coded polypeptide chains of cytochrome c oxidase, the terminal oxidase in mitochondrial electron transport. The sequence is that of Probable cytochrome c oxidase subunit 5C-1 from Arabidopsis thaliana (Mouse-ear cress).